The chain runs to 180 residues: Ribosome maturation factor RimM (180 aa).

In terms of domain architecture, PRC barrel spans 103–176 (GDIWWDRDLV…RIVVDPPPGL (74 aa)).

It belongs to the RimM family. Binds ribosomal protein uS19.

The protein localises to the cytoplasm. In terms of biological role, an accessory protein needed during the final step in the assembly of 30S ribosomal subunit, possibly for assembly of the head region. Essential for efficient processing of 16S rRNA. May be needed both before and after RbfA during the maturation of 16S rRNA. It has affinity for free ribosomal 30S subunits but not for 70S ribosomes. In Frankia alni (strain DSM 45986 / CECT 9034 / ACN14a), this protein is Ribosome maturation factor RimM.